Here is a 104-residue protein sequence, read N- to C-terminus: Large ribosomal subunit protein uL24 (104 aa).

This sequence belongs to the universal ribosomal protein uL24 family. As to quaternary structure, part of the 50S ribosomal subunit.

Functionally, one of two assembly initiator proteins, it binds directly to the 5'-end of the 23S rRNA, where it nucleates assembly of the 50S subunit. Its function is as follows. One of the proteins that surrounds the polypeptide exit tunnel on the outside of the subunit. This Bartonella quintana (strain Toulouse) (Rochalimaea quintana) protein is Large ribosomal subunit protein uL24.